Here is a 410-residue protein sequence, read N- to C-terminus: Cysteine desulfurase IscS (410 aa).

Residues 80 to 81, Asn160, Gln188, and 208 to 210 each bind pyridoxal 5'-phosphate; these read AT and SGH. Lys211 is subject to N6-(pyridoxal phosphate)lysine. Thr248 provides a ligand contact to pyridoxal 5'-phosphate. Cys334 acts as the Cysteine persulfide intermediate in catalysis. Cys334 is a [2Fe-2S] cluster binding site.

This sequence belongs to the class-V pyridoxal-phosphate-dependent aminotransferase family. NifS/IscS subfamily. As to quaternary structure, homodimer. Forms a heterotetramer with IscU, interacts with other sulfur acceptors. It depends on pyridoxal 5'-phosphate as a cofactor.

The protein localises to the cytoplasm. It catalyses the reaction (sulfur carrier)-H + L-cysteine = (sulfur carrier)-SH + L-alanine. The protein operates within cofactor biosynthesis; iron-sulfur cluster biosynthesis. In terms of biological role, master enzyme that delivers sulfur to a number of partners involved in Fe-S cluster assembly, tRNA modification or cofactor biosynthesis. Catalyzes the removal of elemental sulfur atoms from cysteine to produce alanine. Functions as a sulfur delivery protein for Fe-S cluster synthesis onto IscU, an Fe-S scaffold assembly protein, as well as other S acceptor proteins. This Rickettsia typhi (strain ATCC VR-144 / Wilmington) protein is Cysteine desulfurase IscS.